Here is a 374-residue protein sequence, read N- to C-terminus: MADKDLYAILGVCRTANQDEIKKAYRKLSMKWHPDRNPNNKEEAEEKFKEINKAYEILSDSQKRASYDRFGFDAANQGAAGGGFSGGNFSDIFGDVFGDIFGNVRQTNGARQTRGHDLAYKIELSLEEAIHGVEKQIRIATQVRCGECHGSGMNAKSKKKTCPTCNGAGQVRMQQGFFSIAQPCPTCHGRGEIIENPCNKCQGTGRVKDTRVLTVNIPAGVDNGDRIRLSGEGEAGELGAPAGDLYIEIFVRAHPIFERQGNDLYCKMPISFTTACLGGDLEVPTLNGRVKLSIPEETQTGKTFRLKGKGVQSVRSNSVGDLYCTVTIETPINLSKAQKELLMNFEQALNEGGKTHTPQAKGFFDNIKQFFDNL.

Residues 5-71 enclose the J domain; the sequence is DLYAILGVCR…QKRASYDRFG (67 aa). The CR-type zinc finger occupies 132–210; the sequence is GVEKQIRIAT…CQGTGRVKDT (79 aa). Zn(2+)-binding residues include cysteine 145, cysteine 148, cysteine 162, cysteine 165, cysteine 184, cysteine 187, cysteine 198, and cysteine 201. 4 CXXCXGXG motif repeats span residues 145–152, 162–169, 184–191, and 198–205; these read CGECHGSG, CPTCNGAG, CPTCHGRG, and CNKCQGTG.

It belongs to the DnaJ family. As to quaternary structure, homodimer. The cofactor is Zn(2+).

The protein resides in the cytoplasm. Participates actively in the response to hyperosmotic and heat shock by preventing the aggregation of stress-denatured proteins and by disaggregating proteins, also in an autonomous, DnaK-independent fashion. Unfolded proteins bind initially to DnaJ; upon interaction with the DnaJ-bound protein, DnaK hydrolyzes its bound ATP, resulting in the formation of a stable complex. GrpE releases ADP from DnaK; ATP binding to DnaK triggers the release of the substrate protein, thus completing the reaction cycle. Several rounds of ATP-dependent interactions between DnaJ, DnaK and GrpE are required for fully efficient folding. Also involved, together with DnaK and GrpE, in the DNA replication of plasmids through activation of initiation proteins. The protein is Chaperone protein DnaJ of Dichelobacter nodosus (strain VCS1703A).